Here is a 323-residue protein sequence, read N- to C-terminus: Low affinity immunoglobulin gamma Fc region receptor II-c (323 aa).

An N-terminal signal peptide occupies residues 1–42 (MGILSFLPVLATESDWADCKSPQPWGHMLLWTAVLFLAPVAG). At 43-223 (TPAAPPKAVL…VQAPSSSPMG (181 aa)) the chain is on the extracellular side. 2 Ig-like C2-type domains span residues 48–127 (PKAV…VHLT) and 131–213 (EWLV…VTIT). 2 cysteine pairs are disulfide-bonded: cysteine 71–cysteine 113 and cysteine 152–cysteine 196. Asparagine 106, asparagine 180, and asparagine 187 each carry an N-linked (GlcNAc...) asparagine glycan. A helical membrane pass occupies residues 224 to 246 (IIVAVVTGIAVAAIVAAVVALIY). At 247–323 (CRKKRISANS…PPNDHVNSNN (77 aa)) the chain is on the cytoplasmic side. The disordered stretch occupies residues 277–323 (KRQPEETNNDYETADGGYMTLNPRAPTDDDKNIYLTLPPNDHVNSNN). Tyrosine 294 and tyrosine 310 each carry phosphotyrosine; by SRC-type Tyr-kinases.

Post-translationally, phosphorylated by SRC-type Tyr-kinases such as LYN, BLK, FYN and SYK. As to expression, isoform IIC1 is detected in monocytes, macrophages, polymorphonuclear cells and natural killer cells.

It localises to the cytoplasm. The protein localises to the cell membrane. Receptor for the Fc region of complexed immunoglobulins gamma. Low affinity receptor. Involved in a variety of effector and regulatory functions such as phagocytosis of immune complexes and modulation of antibody production by B-cells. This Homo sapiens (Human) protein is Low affinity immunoglobulin gamma Fc region receptor II-c (FCGR2C).